The sequence spans 703 residues: Phenylalanine aminomutase (L-beta-phenylalanine forming) (703 aa).

The active-site Proton donor/acceptor is tyrosine 79. A cross-link (5-imidazolinone (Ala-Gly)) is located at residues 177-179 (ASG). Serine 178 carries the 2,3-didehydroalanine (Ser) modification.

Belongs to the PAL/histidase family. Contains an active site 4-methylidene-imidazol-5-one (MIO), which is formed autocatalytically by cyclization and dehydration of residues Ala-Ser-Gly.

It carries out the reaction L-phenylalanine = L-beta-phenylalanine. It functions in the pathway mycotoxin biosynthesis. In terms of biological role, phenylalanine aminomutase; part of the gene cluster that mediates the biosynthesis of the mycotoxin cyclochlorotine, a hepatotoxic and carcinogenic cyclic chlorinated pentapeptide. Within the pathway, cctP1 provides the uncommon building block beta-Phe from Phe. The NRPS cctN initially catalyzes the condensation of L-serine (Ser), Pro, L-2-aminobutyrate (2Abu), Ser, and beta-Phe in this order to produce isocyclotine. After the dichlorination of Pro2 catalyzed by cctP2 to produce isocyclochlorotine, the cctO-mediated transacylation of isocyclochlorotine can furnish cyclochlorotine. The subsequent hydroxylation of cyclochlorotine by cctR yields hydroxycyclochlorotine as the final product. CctP1 probably acts as a phenylalanine aminomutase and provides the uncommon building block beta-Phe. Furthermore, 2Abu can be synthesized from threonine by one of the threonine dehydratases and transaminases localized outside of the cluster. The functions of the remaining proteins encoded by the cluster, cctM and cctT, have not been identified yet. The polypeptide is Phenylalanine aminomutase (L-beta-phenylalanine forming) (Talaromyces islandicus (Penicillium islandicum)).